Here is a 323-residue protein sequence, read N- to C-terminus: uncharacterized protein (323 aa).

Its subcellular location is the mitochondrion. This is an uncharacterized protein from Schizosaccharomyces pombe (strain 972 / ATCC 24843) (Fission yeast).